The primary structure comprises 132 residues: Small ribosomal subunit protein uS8 (132 aa).

Belongs to the universal ribosomal protein uS8 family. As to quaternary structure, part of the 30S ribosomal subunit. Contacts proteins S5 and S12.

One of the primary rRNA binding proteins, it binds directly to 16S rRNA central domain where it helps coordinate assembly of the platform of the 30S subunit. The protein is Small ribosomal subunit protein uS8 of Rickettsia typhi (strain ATCC VR-144 / Wilmington).